The chain runs to 255 residues: NAD-dependent protein deacylase (255 aa).

One can recognise a Deacetylase sirtuin-type domain in the interval 1-253 (MIEEAPRIIA…VKVKRCLENK (253 aa)). Residue 20–39 (GAGVSAESGIPTFRDRGGLW) coordinates NAD(+). Substrate-binding residues include Y64 and R67. 98 to 101 (QNID) serves as a coordination point for NAD(+). The Proton acceptor role is filled by H116. Zn(2+)-binding residues include C124, C127, C151, and C154. Residues 191–193 (GTS), 217–219 (NTK), and A235 each bind NAD(+).

It belongs to the sirtuin family. Class III subfamily. Zn(2+) is required as a cofactor.

The protein resides in the cytoplasm. The catalysed reaction is N(6)-acetyl-L-lysyl-[protein] + NAD(+) + H2O = 2''-O-acetyl-ADP-D-ribose + nicotinamide + L-lysyl-[protein]. It carries out the reaction N(6)-succinyl-L-lysyl-[protein] + NAD(+) + H2O = 2''-O-succinyl-ADP-D-ribose + nicotinamide + L-lysyl-[protein]. Its function is as follows. NAD-dependent lysine deacetylase and desuccinylase that specifically removes acetyl and succinyl groups on target proteins. Modulates the activities of several proteins which are inactive in their acylated form. Deacetylates the N-terminal lysine residue of Alba, the major archaeal chromatin protein and that, in turn, increases Alba's DNA binding affinity, thereby repressing transcription. The polypeptide is NAD-dependent protein deacylase (Thermococcus sibiricus (strain DSM 12597 / MM 739)).